A 283-amino-acid polypeptide reads, in one-letter code: Thymidylate synthase (283 aa).

Residue R22 participates in dUMP binding. C160 serves as the catalytic Nucleophile. Residues 180-183 (RSCD), N191, and 221-223 (HIY) contribute to the dUMP site. (6R)-5,10-methylene-5,6,7,8-tetrahydrofolate is bound at residue D183. S282 lines the (6R)-5,10-methylene-5,6,7,8-tetrahydrofolate pocket.

The protein belongs to the thymidylate synthase family. Bacterial-type ThyA subfamily. In terms of assembly, homodimer.

It is found in the cytoplasm. The enzyme catalyses dUMP + (6R)-5,10-methylene-5,6,7,8-tetrahydrofolate = 7,8-dihydrofolate + dTMP. The protein operates within pyrimidine metabolism; dTTP biosynthesis. Its function is as follows. Catalyzes the reductive methylation of 2'-deoxyuridine-5'-monophosphate (dUMP) to 2'-deoxythymidine-5'-monophosphate (dTMP) while utilizing 5,10-methylenetetrahydrofolate (mTHF) as the methyl donor and reductant in the reaction, yielding dihydrofolate (DHF) as a by-product. This enzymatic reaction provides an intracellular de novo source of dTMP, an essential precursor for DNA biosynthesis. This is Thymidylate synthase from Actinobacillus succinogenes (strain ATCC 55618 / DSM 22257 / CCUG 43843 / 130Z).